The chain runs to 449 residues: Probable cysteine proteinase 224L (449 aa).

Catalysis depends on residues C99, H292, and N322. A helical transmembrane segment spans residues 429 to 449; the sequence is DTQIVFIFFLSVVILFIFIIL.

The protein belongs to the peptidase C1 family.

It localises to the membrane. Probable cysteine protease. The chain is Probable cysteine proteinase 224L from Acheta domesticus (House cricket).